The chain runs to 462 residues: Annexin A7 (462 aa).

The interval 1 to 130 (MSYPPNQGYP…QGYPPQQGYP (130 aa)) is disordered. Positions 7 to 131 (QGYPPQSNSP…GYPPQQGYPP (125 aa)) are 19 X 6 AA tandem repeats of Q-G-Y-P-P-Q. A compositionally biased stretch (low complexity) spans 16 to 130 (PQPGQYGAPQ…QGYPPQQGYP (115 aa)). Annexin repeat units lie at residues 161–232 (HDCK…ALLT), 233–304 (EPAH…KLTE), 315–388 (MQVS…AIVT), and 392–462 (NPYG…DIIS).

It belongs to the annexin family.

Calcium/phospholipid-binding protein which promotes membrane fusion and is involved in exocytosis. The chain is Annexin A7 (nxnA) from Dictyostelium discoideum (Social amoeba).